The chain runs to 327 residues: Tetraacyldisaccharide 4'-kinase (327 aa).

52–59 (TLGGAGKT) is a binding site for ATP.

It belongs to the LpxK family.

It carries out the reaction a lipid A disaccharide + ATP = a lipid IVA + ADP + H(+). Its pathway is glycolipid biosynthesis; lipid IV(A) biosynthesis; lipid IV(A) from (3R)-3-hydroxytetradecanoyl-[acyl-carrier-protein] and UDP-N-acetyl-alpha-D-glucosamine: step 6/6. Transfers the gamma-phosphate of ATP to the 4'-position of a tetraacyldisaccharide 1-phosphate intermediate (termed DS-1-P) to form tetraacyldisaccharide 1,4'-bis-phosphate (lipid IVA). The chain is Tetraacyldisaccharide 4'-kinase from Methylorubrum populi (strain ATCC BAA-705 / NCIMB 13946 / BJ001) (Methylobacterium populi).